The primary structure comprises 129 residues: UPF0102 protein Clim_0016 (129 aa).

The protein belongs to the UPF0102 family.

This chain is UPF0102 protein Clim_0016, found in Chlorobium limicola (strain DSM 245 / NBRC 103803 / 6330).